The chain runs to 114 residues: Large ribosomal subunit protein uL18 (114 aa).

Belongs to the universal ribosomal protein uL18 family. In terms of assembly, part of the 50S ribosomal subunit; part of the 5S rRNA/L5/L18/L25 subcomplex. Contacts the 5S and 23S rRNAs.

This is one of the proteins that bind and probably mediate the attachment of the 5S RNA into the large ribosomal subunit, where it forms part of the central protuberance. The chain is Large ribosomal subunit protein uL18 from Parabacteroides distasonis (strain ATCC 8503 / DSM 20701 / CIP 104284 / JCM 5825 / NCTC 11152).